We begin with the raw amino-acid sequence, 409 residues long: Translation initiation factor 2 subunit gamma (409 aa).

A tr-type G domain is found at 7-203 (QPEVNIGLVG…AIEREIPTPE (197 aa)). A G1 region spans residues 16–23 (GHVDHGKT). Residues Asp19, Thr23, Gly44, and Ser46 each contribute to the Mg(2+) site. 19-24 (DHGKTT) serves as a coordination point for GTP. The segment at 44-48 (GISIR) is G2. Positions 90-93 (DAPG) are G3. GTP-binding positions include 146–149 (NKID) and 181–183 (SAQ). The G4 stretch occupies residues 146–149 (NKID). A G5 region spans residues 181 to 183 (SAQ).

The protein belongs to the TRAFAC class translation factor GTPase superfamily. Classic translation factor GTPase family. EIF2G subfamily. As to quaternary structure, heterotrimer composed of an alpha, a beta and a gamma chain. It depends on Mg(2+) as a cofactor.

It catalyses the reaction GTP + H2O = GDP + phosphate + H(+). Functionally, eIF-2 functions in the early steps of protein synthesis by forming a ternary complex with GTP and initiator tRNA. In Haloquadratum walsbyi (strain DSM 16790 / HBSQ001), this protein is Translation initiation factor 2 subunit gamma.